The sequence spans 396 residues: Adenylyltransferase and sulfurtransferase UBA4 (396 aa).

Residues G51, D72, 79-83, K95, and 139-140 contribute to the ATP site; these read SNLHR and DG. The Zn(2+) site is built by C180 and C183. Catalysis depends on C197, which acts as the Glycyl thioester intermediate; for adenylyltransferase activity. 2 residues coordinate Zn(2+): C257 and C260. The Rhodanese domain occupies 305–394; sequence VSTKHILLDV…WAKNVDEKFP (90 aa). The active-site Cysteine persulfide intermediate; for sulfurtransferase activity is the C355.

In the N-terminal section; belongs to the HesA/MoeB/ThiF family. UBA4 subfamily. Zn(2+) is required as a cofactor.

The protein resides in the cytoplasm. It localises to the cytosol. Its pathway is tRNA modification; 5-methoxycarbonylmethyl-2-thiouridine-tRNA biosynthesis. Its function is as follows. Plays a central role in 2-thiolation of mcm(5)S(2)U at tRNA wobble positions of cytosolic tRNA(Lys), tRNA(Glu) and tRNA(Gln). Acts by mediating the C-terminal thiocarboxylation of sulfur carrier URM1. Its N-terminus first activates URM1 as acyl-adenylate (-COAMP), then the persulfide sulfur on the catalytic cysteine is transferred to URM1 to form thiocarboxylation (-COSH) of its C-terminus. The reaction probably involves hydrogen sulfide that is generated from the persulfide intermediate and that acts as a nucleophile towards URM1. Subsequently, a transient disulfide bond is formed. Does not use thiosulfate as sulfur donor; NFS1 probably acting as a sulfur donor for thiocarboxylation reactions. Prior mcm(5) tRNA modification by the elongator complex is required for 2-thiolation. May also be involved in protein urmylation. This chain is Adenylyltransferase and sulfurtransferase UBA4, found in Yarrowia lipolytica (strain CLIB 122 / E 150) (Yeast).